Consider the following 389-residue polypeptide: Lipid-A-disaccharide synthase (389 aa).

The protein belongs to the LpxB family.

It catalyses the reaction a lipid X + a UDP-2-N,3-O-bis[(3R)-3-hydroxyacyl]-alpha-D-glucosamine = a lipid A disaccharide + UDP + H(+). It functions in the pathway bacterial outer membrane biogenesis; LPS lipid A biosynthesis. In terms of biological role, condensation of UDP-2,3-diacylglucosamine and 2,3-diacylglucosamine-1-phosphate to form lipid A disaccharide, a precursor of lipid A, a phosphorylated glycolipid that anchors the lipopolysaccharide to the outer membrane of the cell. The sequence is that of Lipid-A-disaccharide synthase from Burkholderia ambifaria (strain ATCC BAA-244 / DSM 16087 / CCUG 44356 / LMG 19182 / AMMD) (Burkholderia cepacia (strain AMMD)).